An 85-amino-acid polypeptide reads, in one-letter code: Protein RALF-like 28 (85 aa).

The first 31 residues, 1–31 (MSILKETKRFMVVAMFIACVFISNNMNVAVA), serve as a signal peptide directing secretion. Disulfide bonds link Cys48–Cys53 and Cys66–Cys72. Positions 60–85 (NPYHRGCEKSKRCRGPDPPALPRKMI) are disordered. The segment covering 75–85 (PDPPALPRKMI) has biased composition (pro residues).

It belongs to the plant rapid alkalinization factor (RALF) family.

The protein resides in the secreted. Cell signaling peptide that may regulate plant stress, growth, and development. Mediates a rapid alkalinization of extracellular space by mediating a transient increase in the cytoplasmic Ca(2+) concentration leading to a calcium-dependent signaling events through a cell surface receptor and a concomitant activation of some intracellular mitogen-activated protein kinases. This Arabidopsis thaliana (Mouse-ear cress) protein is Protein RALF-like 28 (RALFL28).